We begin with the raw amino-acid sequence, 301 residues long: Dimethylsulfoniopropionate lyase (301 aa).

Active-site proton donor/acceptor residues include Cys-111 and Cys-230.

This sequence belongs to the aspartate/glutamate racemases family. ALMA1 subfamily. As to quaternary structure, homotetramer.

It carries out the reaction S,S-dimethyl-beta-propiothetin = acrylate + dimethyl sulfide + H(+). In terms of biological role, mediates cleavage of dimethylsulfoniopropionate (DMSP) into dimethyl sulfide (DMS) and acrylate. DMS is the principal form by which sulfur is transported from oceans to the atmosphere and is a key component of the ocean sulfur cycle. In Durusdinium sp. clade D (Symbiodinium sp. clade D), this protein is Dimethylsulfoniopropionate lyase.